We begin with the raw amino-acid sequence, 173 residues long: ATP-dependent protease subunit HslV (173 aa).

Thr2 is a catalytic residue. Residues Gly158, Asp161, and Thr164 each coordinate Na(+).

This sequence belongs to the peptidase T1B family. HslV subfamily. In terms of assembly, a double ring-shaped homohexamer of HslV is capped on each side by a ring-shaped HslU homohexamer. The assembly of the HslU/HslV complex is dependent on binding of ATP.

Its subcellular location is the cytoplasm. The enzyme catalyses ATP-dependent cleavage of peptide bonds with broad specificity.. With respect to regulation, allosterically activated by HslU binding. Protease subunit of a proteasome-like degradation complex believed to be a general protein degrading machinery. This chain is ATP-dependent protease subunit HslV, found in Actinobacillus succinogenes (strain ATCC 55618 / DSM 22257 / CCUG 43843 / 130Z).